The following is a 99-amino-acid chain: MNTIQVIIFAVVLVLTVTVGQADEDSPEASLLRKLKEAEASLFGQNLEESRNSRQKRCGGVDAPCDKDRPDCCSYAECLRPSGYGWWHGTYYCYRKRER.

The N-terminal stretch at 1–22 is a signal peptide; it reads MNTIQVIIFAVVLVLTVTVGQA. Residues 23–57 constitute a propeptide that is removed on maturation; it reads DEDSPEASLLRKLKEAEASLFGQNLEESRNSRQKR. Disulfide bonds link Cys-58/Cys-73, Cys-65/Cys-78, and Cys-72/Cys-93.

The protein belongs to the neurotoxin 14 (magi-1) family. 08 (Ltx-4) subfamily. Expressed by the venom gland.

The protein resides in the secreted. Its function is as follows. Insecticidal neurotoxin. This Lasiodora sp. (strain IBSP 8539) (Brazilian salmon pink birdeater) protein is U2-theraphotoxin-Lsp1a.